The sequence spans 248 residues: UPF0736 protein BCAH187_A1335 (248 aa).

This sequence belongs to the UPF0736 family.

The protein is UPF0736 protein BCAH187_A1335 of Bacillus cereus (strain AH187).